Here is a 291-residue protein sequence, read N- to C-terminus: Acetyl-coenzyme A carboxylase carboxyl transferase subunit beta (291 aa).

The disordered stretch occupies residues 1–23 (MSWLSKLMPSGIRTDNTPSKKRS). One can recognise a CoA carboxyltransferase N-terminal domain in the interval 28-291 (LWEKCSNCGS…LGRQPAPEVA (264 aa)). The Zn(2+) site is built by Cys-32, Cys-35, Cys-51, and Cys-54. The C4-type zinc-finger motif lies at 32–54 (CSNCGSALYRPELEENLEVCPKC).

Belongs to the AccD/PCCB family. Acetyl-CoA carboxylase is a heterohexamer composed of biotin carboxyl carrier protein (AccB), biotin carboxylase (AccC) and two subunits each of ACCase subunit alpha (AccA) and ACCase subunit beta (AccD). Zn(2+) serves as cofactor.

Its subcellular location is the cytoplasm. It catalyses the reaction N(6)-carboxybiotinyl-L-lysyl-[protein] + acetyl-CoA = N(6)-biotinyl-L-lysyl-[protein] + malonyl-CoA. The protein operates within lipid metabolism; malonyl-CoA biosynthesis; malonyl-CoA from acetyl-CoA: step 1/1. In terms of biological role, component of the acetyl coenzyme A carboxylase (ACC) complex. Biotin carboxylase (BC) catalyzes the carboxylation of biotin on its carrier protein (BCCP) and then the CO(2) group is transferred by the transcarboxylase to acetyl-CoA to form malonyl-CoA. In Stenotrophomonas maltophilia (strain K279a), this protein is Acetyl-coenzyme A carboxylase carboxyl transferase subunit beta.